The sequence spans 519 residues: LysM domain-containing protein ARB_03442 (519 aa).

The first 19 residues, 1-19 (MGQLKQLAGILALASPAIA), serve as a signal peptide directing secretion. N-linked (GlcNAc...) asparagine glycosylation is present at asparagine 47. Positions 312 to 358 (KYYNVVAGDTCASISSEFEVTMDELLTYNPELHPNCENLWANFAICV) constitute a LysM domain. The tract at residues 314-358 (YNVVAGDTCASISSEFEVTMDELLTYNPELHPNCENLWANFAICV) is lysM domain. The segment covering 407-416 (PDAPDAQGQT) has biased composition (low complexity). Positions 407-458 (PDAPDAQGQTVHDDEPPEEPHIEEPPKDIPAGDDDDRKKAKLPLPSGKYPLP) are disordered. A compositionally biased stretch (basic and acidic residues) spans 417 to 433 (VHDDEPPEEPHIEEPPK). N-linked (GlcNAc...) asparagine glycosylation is present at asparagine 460. A Chitin-binding type-1 domain is found at 467-510 (DGSCNEYISCVGSPFGVCCSTSGWCGYGKPWCGVGNCVSGYCDT). 4 disulfide bridges follow: cysteine 470–cysteine 485, cysteine 476–cysteine 491, cysteine 484–cysteine 498, and cysteine 503–cysteine 508.

The protein localises to the secreted. Its function is as follows. Might have a role in sequestration of chitin oligosaccharides (breakdown products of fungal cell walls that are released during invasion and act as triggers of host immunity) to dampen host defense. The chain is LysM domain-containing protein ARB_03442 from Arthroderma benhamiae (strain ATCC MYA-4681 / CBS 112371) (Trichophyton mentagrophytes).